The following is a 351-amino-acid chain: CCN family member 3 (351 aa).

Positions 1-24 (METGGGQGLPVLLLLLLLLRPCEV) are cleaved as a signal peptide. In terms of domain architecture, IGFBP N-terminal spans 27 to 101 (REAACPRPCG…GGGAGICMVL (75 aa)). 6 disulfides stabilise this stretch: Cys-31–Cys-57, Cys-35–Cys-59, Cys-39–Cys-60, Cys-46–Cys-63, Cys-71–Cys-85, and Cys-77–Cys-98. Positions 104–170 (DNCVFDGMIY…GECCEKWVCD (67 aa)) constitute a VWFC domain. The TSP type-1 domain occupies 201 to 246 (NCIEQTTEWSACSKSCGMGFSTRVTNRNQQCEMVKQTRLCMMRPCE). Intrachain disulfides connect Cys-258/Cys-295, Cys-275/Cys-309, Cys-286/Cys-325, Cys-289/Cys-327, and Cys-294/Cys-331. The CTCK domain maps to 258–332 (CIQTKKSMKA…NTCVCHGNCP (75 aa)). Asn-274 carries N-linked (GlcNAc...) asparagine glycosylation.

Belongs to the CCN family. Brain and heart, and at a lower level in muscle and intestine, in the embryo. Lung and less so in brain and spleen, in adult chicken.

The protein resides in the secreted. It localises to the cytoplasm. The protein localises to the cell junction. Its subcellular location is the gap junction. Functionally, immediate-early protein likely to play a role in cell growth regulation. Its overexpression is associated with tumorigenesis and expression of a N-terminal-truncated version of CCN3 gene in chicken embryonic fibroblasts (CEF) is sufficient to induce the transformation of CEF in vitro. The protein is CCN family member 3 (CCN3) of Gallus gallus (Chicken).